A 449-amino-acid chain; its full sequence is Tubulin alpha chain (449 aa).

GTP is bound by residues Q11, E71, S140, G144, T145, T179, N206, and N228. E71 is a Mg(2+) binding site. The active site involves E254.

This sequence belongs to the tubulin family. Dimer of alpha and beta chains. A typical microtubule is a hollow water-filled tube with an outer diameter of 25 nm and an inner diameter of 15 nM. Alpha-beta heterodimers associate head-to-tail to form protofilaments running lengthwise along the microtubule wall with the beta-tubulin subunit facing the microtubule plus end conferring a structural polarity. Microtubules usually have 13 protofilaments but different protofilament numbers can be found in some organisms and specialized cells. Mg(2+) is required as a cofactor.

It localises to the cytoplasm. The protein localises to the cytoskeleton. The enzyme catalyses GTP + H2O = GDP + phosphate + H(+). Its function is as follows. Tubulin is the major constituent of microtubules, a cylinder consisting of laterally associated linear protofilaments composed of alpha- and beta-tubulin heterodimers. Microtubules grow by the addition of GTP-tubulin dimers to the microtubule end, where a stabilizing cap forms. Below the cap, tubulin dimers are in GDP-bound state, owing to GTPase activity of alpha-tubulin. This chain is Tubulin alpha chain (TUB1), found in Gibberella zeae (strain ATCC MYA-4620 / CBS 123657 / FGSC 9075 / NRRL 31084 / PH-1) (Wheat head blight fungus).